Reading from the N-terminus, the 361-residue chain is Queuine tRNA-ribosyltransferase (361 aa).

Asp92 functions as the Proton acceptor in the catalytic mechanism. Substrate-binding positions include 92–96 (DSGGF), Asp146, Gln189, and Gly216. Residues 247–253 (GVGKPAD) are RNA binding. Residue Asp266 is the Nucleophile of the active site. An RNA binding; important for wobble base 34 recognition region spans residues 271-275 (TRSGR). 4 residues coordinate Zn(2+): Cys304, Cys306, Cys309, and His335.

This sequence belongs to the queuine tRNA-ribosyltransferase family. As to quaternary structure, homodimer. Within each dimer, one monomer is responsible for RNA recognition and catalysis, while the other monomer binds to the replacement base PreQ1. Zn(2+) serves as cofactor.

The catalysed reaction is 7-aminomethyl-7-carbaguanine + guanosine(34) in tRNA = 7-aminomethyl-7-carbaguanosine(34) in tRNA + guanine. Its pathway is tRNA modification; tRNA-queuosine biosynthesis. Functionally, catalyzes the base-exchange of a guanine (G) residue with the queuine precursor 7-aminomethyl-7-deazaguanine (PreQ1) at position 34 (anticodon wobble position) in tRNAs with GU(N) anticodons (tRNA-Asp, -Asn, -His and -Tyr). Catalysis occurs through a double-displacement mechanism. The nucleophile active site attacks the C1' of nucleotide 34 to detach the guanine base from the RNA, forming a covalent enzyme-RNA intermediate. The proton acceptor active site deprotonates the incoming PreQ1, allowing a nucleophilic attack on the C1' of the ribose to form the product. After dissociation, two additional enzymatic reactions on the tRNA convert PreQ1 to queuine (Q), resulting in the hypermodified nucleoside queuosine (7-(((4,5-cis-dihydroxy-2-cyclopenten-1-yl)amino)methyl)-7-deazaguanosine). The chain is Queuine tRNA-ribosyltransferase from Rickettsia rickettsii (strain Iowa).